A 560-amino-acid polypeptide reads, in one-letter code: Bifunctional NAD(P)H-hydrate repair enzyme (560 aa).

Positions 1 to 241 are NAD(P)H-hydrate epimerase; that stretch reads MLSRLSERCS…WMTAPERMRA (241 aa). The YjeF N-terminal domain maps to 29-235; the sequence is LRDAEPAAAA…SLGLEDWMTA (207 aa). An NADPHX 1; for epimerase activity region spans residues 77 to 81; it reads NNGGD. Residues asparagine 78 and aspartate 145 each contribute to the K(+) site. The tract at residues 149–155 is NADPHX 1; for epimerase activity; it reads GTGICGP. Tyrosine 160 and aspartate 178 together coordinate (6S)-NADPHX. K(+) is bound at residue serine 181. Residues 249-547 enclose the YjeF C-terminal domain; the sequence is LDDVYEYFGI…HRVPLIVNAS (299 aa). Residues 249–560 form an ADP-dependent (S)-NAD(P)H-hydrate dehydratase region; that stretch reads LDDVYEYFGI…PATRQRSSGP (312 aa). Glycine 351 serves as a coordination point for (6S)-NADPHX. The tract at residues 417–423 is NADPHX 2; for dehydratase activity; it reads HPGEAAR. ADP-binding positions include 454 to 458 and 475 to 484; these read KGPGT and NAGMASGGMG. Aspartate 485 lines the (6S)-NADPHX pocket.

In the N-terminal section; belongs to the NnrE/AIBP family. This sequence in the C-terminal section; belongs to the NnrD/CARKD family. It depends on K(+) as a cofactor.

The enzyme catalyses (6S)-NADHX + ADP = AMP + phosphate + NADH + H(+). The catalysed reaction is (6S)-NADPHX + ADP = AMP + phosphate + NADPH + H(+). It catalyses the reaction (6R)-NADHX = (6S)-NADHX. It carries out the reaction (6R)-NADPHX = (6S)-NADPHX. Its function is as follows. Bifunctional enzyme that catalyzes the epimerization of the S- and R-forms of NAD(P)HX and the dehydration of the S-form of NAD(P)HX at the expense of ADP, which is converted to AMP. This allows the repair of both epimers of NAD(P)HX, a damaged form of NAD(P)H that is a result of enzymatic or heat-dependent hydration. The protein is Bifunctional NAD(P)H-hydrate repair enzyme of Leishmania infantum.